The primary structure comprises 288 residues: Acetyl-coenzyme A carboxylase carboxyl transferase subunit beta (288 aa).

A CoA carboxyltransferase N-terminal domain is found at 34-288 (LFSKCPACKV…RLLRMHGGVR (255 aa)). The Zn(2+) site is built by Cys-38, Cys-41, Cys-56, and Cys-59. The C4-type zinc-finger motif lies at 38–59 (CPACKVILYKNDLGLEKTCQHC).

The protein belongs to the AccD/PCCB family. In terms of assembly, acetyl-CoA carboxylase is a heterohexamer composed of biotin carboxyl carrier protein (AccB), biotin carboxylase (AccC) and two subunits each of ACCase subunit alpha (AccA) and ACCase subunit beta (AccD). Requires Zn(2+) as cofactor.

The protein resides in the cytoplasm. It catalyses the reaction N(6)-carboxybiotinyl-L-lysyl-[protein] + acetyl-CoA = N(6)-biotinyl-L-lysyl-[protein] + malonyl-CoA. The protein operates within lipid metabolism; malonyl-CoA biosynthesis; malonyl-CoA from acetyl-CoA: step 1/1. Component of the acetyl coenzyme A carboxylase (ACC) complex. Biotin carboxylase (BC) catalyzes the carboxylation of biotin on its carrier protein (BCCP) and then the CO(2) group is transferred by the transcarboxylase to acetyl-CoA to form malonyl-CoA. The protein is Acetyl-coenzyme A carboxylase carboxyl transferase subunit beta of Streptococcus suis (strain 98HAH33).